The chain runs to 175 residues: Adenylate kinase isoenzyme 6 homolog (175 aa).

ATP contacts are provided by G17, G19, K20, T21, and S22. The tract at residues 37-60 (DISSAVKEKELHDGWDSEFQCYIL) is NMPbind. Residues 112 to 122 (KRNYNQHKITN) form an LID region. Residue R113 participates in ATP binding.

The protein belongs to the adenylate kinase family. AK6 subfamily. Monomer and homodimer. Interacts with small ribosomal subunit protein uS11. Not a structural component of 43S pre-ribosomes, but transiently interacts with them by binding to uS11.

It is found in the cytoplasm. The protein localises to the nucleus. It catalyses the reaction AMP + ATP = 2 ADP. The enzyme catalyses ATP + H2O = ADP + phosphate + H(+). In terms of biological role, broad-specificity nucleoside monophosphate (NMP) kinase that catalyzes the reversible transfer of the terminal phosphate group between nucleoside triphosphates and monophosphates. Also has ATPase activity. Involved in the late cytoplasmic maturation steps of the 40S ribosomal particles, specifically 18S rRNA maturation. While NMP activity is not required for ribosome maturation, ATPase activity is. Associates transiently with small ribosomal subunit protein uS11. ATP hydrolysis breaks the interaction with uS11. May temporarily remove uS11 from the ribosome to enable a conformational change of the ribosomal RNA that is needed for the final maturation step of the small ribosomal subunit. Its NMP activity may have a role in nuclear energy homeostasis. In Dictyostelium discoideum (Social amoeba), this protein is Adenylate kinase isoenzyme 6 homolog.